The chain runs to 386 residues: Chaperone protein DnaJ (386 aa).

The J domain occupies 5-69 (DLYDVLGVKK…QKRAQYDQFG (65 aa)). A CR-type zinc finger spans residues 140-224 (GKETSIKYNR…CHGAGVTEER (85 aa)). 8 residues coordinate Zn(2+): Cys153, Cys156, Cys170, Cys173, Cys196, Cys199, Cys212, and Cys215. CXXCXGXG motif repeat units follow at residues 153–160 (CHTCHGSG), 170–177 (CSTCHGQG), 196–203 (CPTCGGKG), and 212–219 (CDTCHGAG).

This sequence belongs to the DnaJ family. As to quaternary structure, homodimer. The cofactor is Zn(2+).

It is found in the cytoplasm. Its function is as follows. Participates actively in the response to hyperosmotic and heat shock by preventing the aggregation of stress-denatured proteins and by disaggregating proteins, also in an autonomous, DnaK-independent fashion. Unfolded proteins bind initially to DnaJ; upon interaction with the DnaJ-bound protein, DnaK hydrolyzes its bound ATP, resulting in the formation of a stable complex. GrpE releases ADP from DnaK; ATP binding to DnaK triggers the release of the substrate protein, thus completing the reaction cycle. Several rounds of ATP-dependent interactions between DnaJ, DnaK and GrpE are required for fully efficient folding. Also involved, together with DnaK and GrpE, in the DNA replication of plasmids through activation of initiation proteins. The chain is Chaperone protein DnaJ from Limosilactobacillus fermentum (strain NBRC 3956 / LMG 18251) (Lactobacillus fermentum).